The primary structure comprises 430 residues: Transcobalamin-2 (430 aa).

Residues 1 to 18 (MELLKALLLLSGVFGALA) form the signal peptide. Cystine bridges form between Cys-21–Cys-270, Cys-116–Cys-312, and Cys-165–Cys-208. Cob(II)alamin contacts are provided by residues 152–156 (TNYYQ), His-193, 193–197 (HVSVD), Asn-245, Ser-248, Gln-294, and 398–400 (WQL).

Belongs to the eukaryotic cobalamin transport proteins family. Interacts with CD320 (via LDL-receptor class A domains).

The protein localises to the secreted. Its function is as follows. Primary vitamin B12-binding and transport protein. Delivers cobalamin to cells. This Mus musculus (Mouse) protein is Transcobalamin-2 (Tcn2).